Here is a 430-residue protein sequence, read N- to C-terminus: Aspartate aminotransferase, mitochondrial (430 aa).

The transit peptide at 1 to 29 (MALLHSARVLSGVASAFHPGLAAAASARA) directs the protein to the mitochondrion. Thr48 carries the post-translational modification Phosphothreonine. Lys59 carries the post-translational modification N6-acetyllysine. Substrate is bound at residue Gly65. Lys73 carries the post-translational modification N6-acetyllysine; alternate. Lys73 carries the N6-succinyllysine; alternate modification. Position 82 is an N6-acetyllysine (Lys82). Lys90 bears the N6-acetyllysine; alternate mark. Lys90 bears the N6-succinyllysine; alternate mark. Tyr96 bears the 3'-nitrotyrosine; alternate mark. Position 96 is a phosphotyrosine; alternate (Tyr96). Position 122 is an N6-acetyllysine; alternate (Lys122). An N6-succinyllysine; alternate modification is found at Lys122. Ser143 carries the phosphoserine modification. Residue Lys159 is modified to N6-acetyllysine; alternate. Lys159 carries the post-translational modification N6-succinyllysine; alternate. Position 162 (Trp162) interacts with substrate. The residue at position 185 (Lys185) is an N6-acetyllysine; alternate. At Lys185 the chain carries N6-succinyllysine; alternate. Asn215 contributes to the substrate binding site. Lys227 carries the post-translational modification N6-succinyllysine. At Lys234 the chain carries N6-acetyllysine. An N6-acetyllysine; alternate mark is found at Lys279 and Lys296. Lys279 bears the N6-(pyridoxal phosphate)lysine; alternate mark. Lys296 is subject to N6-succinyllysine; alternate. Lys302 bears the N6-acetyllysine mark. The residue at position 309 (Lys309) is an N6-acetyllysine; alternate. Residue Lys309 is modified to N6-succinyllysine; alternate. Arg313 is modified (asymmetric dimethylarginine). Lys338 bears the N6-acetyllysine; alternate mark. An N6-succinyllysine; alternate modification is found at Lys338. Lys345 carries the post-translational modification N6-acetyllysine. The residue at position 363 (Lys363) is an N6-acetyllysine; alternate. Lys363 is modified (N6-succinyllysine; alternate). Residues Lys364 and Lys387 each carry the N6-acetyllysine modification. An N6-acetyllysine; alternate mark is found at Lys396 and Lys404. N6-succinyllysine; alternate is present on residues Lys396 and Lys404. Position 407 (Arg407) interacts with substrate.

Belongs to the class-I pyridoxal-phosphate-dependent aminotransferase family. In terms of assembly, homodimer. Pyridoxal 5'-phosphate is required as a cofactor.

It localises to the mitochondrion matrix. The protein localises to the cell membrane. The enzyme catalyses L-aspartate + 2-oxoglutarate = oxaloacetate + L-glutamate. The catalysed reaction is L-kynurenine + 2-oxoglutarate = kynurenate + L-glutamate + H2O. Catalyzes the irreversible transamination of the L-tryptophan metabolite L-kynurenine to form kynurenic acid (KA). As a member of the malate-aspartate shuttle, it has a key role in the intracellular NAD(H) redox balance. Is important for metabolite exchange between mitochondria and cytosol, and for amino acid metabolism. Facilitates cellular uptake of long-chain free fatty acids. This Oryctolagus cuniculus (Rabbit) protein is Aspartate aminotransferase, mitochondrial (GOT2).